We begin with the raw amino-acid sequence, 241 residues long: Orotidine 5'-phosphate decarboxylase (241 aa).

Residues D16, K37, D64–T73, T128, R190, Q199, G219, and R220 contribute to the substrate site. The active-site Proton donor is K66.

It belongs to the OMP decarboxylase family. Type 1 subfamily. In terms of assembly, homodimer.

The catalysed reaction is orotidine 5'-phosphate + H(+) = UMP + CO2. The protein operates within pyrimidine metabolism; UMP biosynthesis via de novo pathway; UMP from orotate: step 2/2. Its function is as follows. Catalyzes the decarboxylation of orotidine 5'-monophosphate (OMP) to uridine 5'-monophosphate (UMP). In Prochlorococcus marinus (strain NATL1A), this protein is Orotidine 5'-phosphate decarboxylase.